A 215-amino-acid chain; its full sequence is Imidazole glycerol phosphate synthase subunit HisH (215 aa).

One can recognise a Glutamine amidotransferase type-1 domain in the interval 8 to 215; the sequence is KVVVFDYGFG…QLLNNWIGTL (208 aa). The active-site Nucleophile is the cysteine 86. Active-site residues include histidine 196 and glutamate 198.

In terms of assembly, heterodimer of HisH and HisF.

Its subcellular location is the cytoplasm. The enzyme catalyses 5-[(5-phospho-1-deoxy-D-ribulos-1-ylimino)methylamino]-1-(5-phospho-beta-D-ribosyl)imidazole-4-carboxamide + L-glutamine = D-erythro-1-(imidazol-4-yl)glycerol 3-phosphate + 5-amino-1-(5-phospho-beta-D-ribosyl)imidazole-4-carboxamide + L-glutamate + H(+). The catalysed reaction is L-glutamine + H2O = L-glutamate + NH4(+). Its pathway is amino-acid biosynthesis; L-histidine biosynthesis; L-histidine from 5-phospho-alpha-D-ribose 1-diphosphate: step 5/9. Functionally, IGPS catalyzes the conversion of PRFAR and glutamine to IGP, AICAR and glutamate. The HisH subunit catalyzes the hydrolysis of glutamine to glutamate and ammonia as part of the synthesis of IGP and AICAR. The resulting ammonia molecule is channeled to the active site of HisF. In Streptomyces avermitilis (strain ATCC 31267 / DSM 46492 / JCM 5070 / NBRC 14893 / NCIMB 12804 / NRRL 8165 / MA-4680), this protein is Imidazole glycerol phosphate synthase subunit HisH.